A 151-amino-acid chain; its full sequence is Methylglyoxal synthase (151 aa).

Residues 6-151 enclose the MGS-like domain; sequence RTMPAHKHVA…DYEAYLAERM (146 aa). Substrate contacts are provided by residues His19, Lys23, 45-48, and 65-66; these read TGTT and SG. The Proton donor/acceptor role is filled by Asp71. Residue His98 coordinates substrate.

It belongs to the methylglyoxal synthase family.

The catalysed reaction is dihydroxyacetone phosphate = methylglyoxal + phosphate. Functionally, catalyzes the formation of methylglyoxal from dihydroxyacetone phosphate. This chain is Methylglyoxal synthase, found in Vibrio parahaemolyticus serotype O3:K6 (strain RIMD 2210633).